Reading from the N-terminus, the 430-residue chain is MSIIDIANNILRKYCLCDRCLGRLFASLGRGLSNDERGKAIKIALVLELHKRYLDGDKDSLKQLVELSPNIGPIAVNLIKNLGIEIEYTPRTCFICDNKINDIIDTYSQRIADIINERHINSFVLGIRGVTSYIRKEESIANEFKLLYWENIKRELKREIGKKIQMMTNAKVDFLNPEAMIIIDIDRDRIYIESPSLLIYGRYWKLGRMISQNIWLTKNGVKKYPLSIEEIAKMLVKDGFGDDVVLHIAGREDVDVRTLGSGRPFVLEIKRPRKRNIDIKDIENRLNSISRWLKFELNMFVDRDFVSRVKKGCRTSYKIYRAIVVADRDIGIEDIKRLEEFFRDRIIEQRTPTRVLRRKKDVLRRRKVFEIKTRVISPRVFEALIKCEGGLYVKELISGDNGRTVPSFSSVLNANTLCLTLDALYVHEYI.

Asp253 serves as the catalytic Nucleophile. The substrate site is built by Tyr320 and Tyr392.

Belongs to the pseudouridine synthase Pus10 family.

The catalysed reaction is uridine(54) in tRNA = pseudouridine(54) in tRNA. It carries out the reaction uridine(55) in tRNA = pseudouridine(55) in tRNA. Functionally, responsible for synthesis of pseudouridine from uracil-54 and uracil-55 in the psi GC loop of transfer RNAs. This Ignisphaera aggregans (strain DSM 17230 / JCM 13409 / AQ1.S1) protein is tRNA pseudouridine synthase Pus10.